A 151-amino-acid polypeptide reads, in one-letter code: MKLILKETISTLGREGDLIDVKAGYGRNYLLPQGKAVLATATNVAELEKNQAEIQAKIAKETAIAEKVAEKLQAINLVIEQLAGDDGRLFGSVTNSDICAALAAQDIVLDKRQIILPDPIKTVSETPVLIKVGFQVATEVVVKVVPLSTKA.

It belongs to the bacterial ribosomal protein bL9 family.

Binds to the 23S rRNA. The chain is Large ribosomal subunit protein bL9 from Desulfotalea psychrophila (strain LSv54 / DSM 12343).